A 642-amino-acid polypeptide reads, in one-letter code: Threonine--tRNA ligase (642 aa).

The TGS domain maps to 1–61 (MPVITLPDGS…ETDAELSIIT (61 aa)). Positions 243–534 (DHRKIGKQLD…LIEEYAGRFP (292 aa)) are catalytic. The Zn(2+) site is built by Cys334, His385, and His511.

This sequence belongs to the class-II aminoacyl-tRNA synthetase family. As to quaternary structure, homodimer. It depends on Zn(2+) as a cofactor.

The protein resides in the cytoplasm. The enzyme catalyses tRNA(Thr) + L-threonine + ATP = L-threonyl-tRNA(Thr) + AMP + diphosphate + H(+). Functionally, catalyzes the attachment of threonine to tRNA(Thr) in a two-step reaction: L-threonine is first activated by ATP to form Thr-AMP and then transferred to the acceptor end of tRNA(Thr). Also edits incorrectly charged L-seryl-tRNA(Thr). This is Threonine--tRNA ligase from Shewanella putrefaciens (strain CN-32 / ATCC BAA-453).